Consider the following 617-residue polypeptide: Chaperone protein DnaK (617 aa).

Phosphothreonine; by autocatalysis is present on Thr-175. Positions Ala-578 to Ala-592 are enriched in low complexity. The segment at Ala-578 to Lys-617 is disordered. Residues Gly-600–Lys-617 are compositionally biased toward basic and acidic residues.

The protein belongs to the heat shock protein 70 family.

Functionally, acts as a chaperone. The protein is Chaperone protein DnaK of Clostridium novyi (strain NT).